The sequence spans 569 residues: Mitogen-activated protein kinase 8 (569 aa).

The Protein kinase domain maps to 13–304 (YKIQEVIGKG…AEEALADPYF (292 aa)). ATP is bound by residues 19–27 (IGKGSYGVV) and Lys42. Asp139 (proton acceptor) is an active-site residue. A Phosphothreonine modification is found at Thr175. The TXY motif lies at 175-177 (TDY). Phosphotyrosine is present on Tyr177. A disordered region spans residues 404 to 432 (TTVHSAPIPPKDHQNITSQVPQRIPGRTG).

Belongs to the protein kinase superfamily. CMGC Ser/Thr protein kinase family. MAP kinase subfamily. Post-translationally, dually phosphorylated on Thr-175 and Tyr-177, which activates the enzyme. Expressed in leaves and panicles.

It carries out the reaction L-seryl-[protein] + ATP = O-phospho-L-seryl-[protein] + ADP + H(+). It catalyses the reaction L-threonyl-[protein] + ATP = O-phospho-L-threonyl-[protein] + ADP + H(+). Its activity is regulated as follows. Activated by threonine and tyrosine phosphorylation. The polypeptide is Mitogen-activated protein kinase 8 (MPK8) (Oryza sativa subsp. japonica (Rice)).